Consider the following 120-residue polypeptide: Large ribosomal subunit protein eL18 (120 aa).

Belongs to the eukaryotic ribosomal protein eL18 family.

This chain is Large ribosomal subunit protein eL18, found in Thermococcus onnurineus (strain NA1).